The sequence spans 235 residues: Phosphatidylserine decarboxylase proenzyme (235 aa).

Ser-204 functions as the Schiff-base intermediate with substrate; via pyruvic acid in the catalytic mechanism. Position 204 is a pyruvic acid (Ser); by autocatalysis (Ser-204).

Belongs to the phosphatidylserine decarboxylase family. PSD-A subfamily. As to quaternary structure, heterodimer of a large membrane-associated beta subunit and a small pyruvoyl-containing alpha subunit. Pyruvate serves as cofactor. Is synthesized initially as an inactive proenzyme. Formation of the active enzyme involves a self-maturation process in which the active site pyruvoyl group is generated from an internal serine residue via an autocatalytic post-translational modification. Two non-identical subunits are generated from the proenzyme in this reaction, and the pyruvate is formed at the N-terminus of the alpha chain, which is derived from the carboxyl end of the proenzyme. The post-translation cleavage follows an unusual pathway, termed non-hydrolytic serinolysis, in which the side chain hydroxyl group of the serine supplies its oxygen atom to form the C-terminus of the beta chain, while the remainder of the serine residue undergoes an oxidative deamination to produce ammonia and the pyruvoyl prosthetic group on the alpha chain.

It localises to the cell membrane. The catalysed reaction is a 1,2-diacyl-sn-glycero-3-phospho-L-serine + H(+) = a 1,2-diacyl-sn-glycero-3-phosphoethanolamine + CO2. It participates in phospholipid metabolism; phosphatidylethanolamine biosynthesis; phosphatidylethanolamine from CDP-diacylglycerol: step 2/2. Catalyzes the formation of phosphatidylethanolamine (PtdEtn) from phosphatidylserine (PtdSer). The polypeptide is Phosphatidylserine decarboxylase proenzyme (Mycobacterium sp. (strain JLS)).